A 546-amino-acid polypeptide reads, in one-letter code: CTP synthase (546 aa).

Residues 1-266 form an amidoligase domain region; it reads MTTRYIFVTG…DQLVTKRFGI (266 aa). CTP is bound at residue Ser-14. A UTP-binding site is contributed by Ser-14. ATP-binding positions include 15 to 20 and Asp-72; that span reads SLGKGI. Asp-72 and Glu-140 together coordinate Mg(2+). Residues 147–149, 187–192, and Lys-223 each bind CTP; these read DIE and KTKPTQ. Residues 187–192 and Lys-223 contribute to the UTP site; that span reads KTKPTQ. Residue 239 to 241 coordinates ATP; sequence KDV. Residues 291–542 form the Glutamine amidotransferase type-1 domain; it reads TIGMVGKYIE…VAAAAAYQKR (252 aa). Position 352 (Gly-352) interacts with L-glutamine. Cys-379 serves as the catalytic Nucleophile; for glutamine hydrolysis. L-glutamine contacts are provided by residues 380-383, Glu-403, and Arg-470; that span reads LGMQ. Catalysis depends on residues His-515 and Glu-517.

It belongs to the CTP synthase family. In terms of assembly, homotetramer.

It catalyses the reaction UTP + L-glutamine + ATP + H2O = CTP + L-glutamate + ADP + phosphate + 2 H(+). It carries out the reaction L-glutamine + H2O = L-glutamate + NH4(+). The enzyme catalyses UTP + NH4(+) + ATP = CTP + ADP + phosphate + 2 H(+). It functions in the pathway pyrimidine metabolism; CTP biosynthesis via de novo pathway; CTP from UDP: step 2/2. Allosterically activated by GTP, when glutamine is the substrate; GTP has no effect on the reaction when ammonia is the substrate. The allosteric effector GTP functions by stabilizing the protein conformation that binds the tetrahedral intermediate(s) formed during glutamine hydrolysis. Inhibited by the product CTP, via allosteric rather than competitive inhibition. In terms of biological role, catalyzes the ATP-dependent amination of UTP to CTP with either L-glutamine or ammonia as the source of nitrogen. Regulates intracellular CTP levels through interactions with the four ribonucleotide triphosphates. The polypeptide is CTP synthase (Shewanella pealeana (strain ATCC 700345 / ANG-SQ1)).